We begin with the raw amino-acid sequence, 583 residues long: Protein LONG AFTER FAR-RED 3 (583 aa).

A helical membrane pass occupies residues 7–27 (FPVMIGFVSAAVFLLISVAYL). Asn-55 and Asn-374 each carry an N-linked (GlcNAc...) asparagine glycan.

It belongs to the metallo-dependent hydrolases superfamily. Expressed at low level in seedlings, roots, leaves, stems, flowers, and siliques.

It is found in the membrane. Its subcellular location is the cytoplasm. The protein resides in the perinuclear region. Its function is as follows. Required for phyA-controlled responses to continuous far-red light (FRc) conditions, including the inhibition of hypocotyl elongation and the regulation of XTH15/XTR7 expression. The protein is Protein LONG AFTER FAR-RED 3 of Arabidopsis thaliana (Mouse-ear cress).